The chain runs to 181 residues: Adenine phosphoribosyltransferase (181 aa).

Belongs to the purine/pyrimidine phosphoribosyltransferase family. Homodimer.

It is found in the cytoplasm. It catalyses the reaction AMP + diphosphate = 5-phospho-alpha-D-ribose 1-diphosphate + adenine. The protein operates within purine metabolism; AMP biosynthesis via salvage pathway; AMP from adenine: step 1/1. Catalyzes a salvage reaction resulting in the formation of AMP, that is energically less costly than de novo synthesis. The polypeptide is Adenine phosphoribosyltransferase (Vibrio cholerae serotype O1 (strain ATCC 39541 / Classical Ogawa 395 / O395)).